The following is a 138-amino-acid chain: Microneme antigen L2 (138 aa).

PAN domains follow at residues 9 to 78 and 82 to 138; these read CFAH…PRSC and CSDA…SKRA. Disulfide bonds link Cys-9–Cys-78, Cys-34–Cys-56, Cys-38–Cys-44, Cys-82–Cys-86, Cys-107–Cys-127, and Cys-111–Cys-117. Ser-18 provides a ligand contact to a carbohydrate. 3 residues coordinate a carbohydrate: Lys-59, Tyr-66, and Asp-71.

As to quaternary structure, homodimer or heterodimer. In terms of processing, contains six disulfide bonds.

The protein resides in the cytoplasmic vesicle. It localises to the secretory vesicle. Its subcellular location is the microneme. Functionally, galactose-binding lectin. Plays a role in adhesion to the host cell. Has a potential role in invasion of host cells. The sequence is that of Microneme antigen L2 from Sarcocystis muris.